The following is a 269-amino-acid chain: Formamidopyrimidine-DNA glycosylase (269 aa).

P2 functions as the Schiff-base intermediate with DNA in the catalytic mechanism. E3 functions as the Proton donor in the catalytic mechanism. K57 serves as the catalytic Proton donor; for beta-elimination activity. DNA is bound by residues H90, R109, and R150. Residues 235–269 (QVYGRKGEPCRVCGTPVVATKHAQRATFYCRHCQK) form an FPG-type zinc finger. Residue R259 is the Proton donor; for delta-elimination activity of the active site.

The protein belongs to the FPG family. In terms of assembly, monomer. The cofactor is Zn(2+).

It carries out the reaction Hydrolysis of DNA containing ring-opened 7-methylguanine residues, releasing 2,6-diamino-4-hydroxy-5-(N-methyl)formamidopyrimidine.. It catalyses the reaction 2'-deoxyribonucleotide-(2'-deoxyribose 5'-phosphate)-2'-deoxyribonucleotide-DNA = a 3'-end 2'-deoxyribonucleotide-(2,3-dehydro-2,3-deoxyribose 5'-phosphate)-DNA + a 5'-end 5'-phospho-2'-deoxyribonucleoside-DNA + H(+). Its function is as follows. Involved in base excision repair of DNA damaged by oxidation or by mutagenic agents. Acts as a DNA glycosylase that recognizes and removes damaged bases. Has a preference for oxidized purines, such as 7,8-dihydro-8-oxoguanine (8-oxoG). Has AP (apurinic/apyrimidinic) lyase activity and introduces nicks in the DNA strand. Cleaves the DNA backbone by beta-delta elimination to generate a single-strand break at the site of the removed base with both 3'- and 5'-phosphates. In Salmonella arizonae (strain ATCC BAA-731 / CDC346-86 / RSK2980), this protein is Formamidopyrimidine-DNA glycosylase.